The chain runs to 419 residues: Tyrosine--tRNA ligase (419 aa).

L-tyrosine is bound at residue tyrosine 34. Residues 39 to 48 (PTADSLHLGN) carry the 'HIGH' region motif. Residues tyrosine 169 and glutamine 173 each coordinate L-tyrosine. A 'KMSKS' region motif is present at residues 229-233 (KFGKS). Lysine 232 is a binding site for ATP. The region spanning 353–419 (LTLVELLISA…GKKKNFVLTY (67 aa)) is the S4 RNA-binding domain.

The protein belongs to the class-I aminoacyl-tRNA synthetase family. TyrS type 1 subfamily. Homodimer.

The protein resides in the cytoplasm. The catalysed reaction is tRNA(Tyr) + L-tyrosine + ATP = L-tyrosyl-tRNA(Tyr) + AMP + diphosphate + H(+). Its function is as follows. Catalyzes the attachment of tyrosine to tRNA(Tyr) in a two-step reaction: tyrosine is first activated by ATP to form Tyr-AMP and then transferred to the acceptor end of tRNA(Tyr). This is Tyrosine--tRNA ligase from Lactococcus lactis subsp. lactis (strain IL1403) (Streptococcus lactis).